The following is a 566-amino-acid chain: Phenylalanine--tRNA ligase beta subunit (566 aa).

The 76-residue stretch at Tyr-287 to Pro-362 folds into the B5 domain. Asp-340, Asp-346, Glu-349, and Asp-350 together coordinate Mg(2+).

The protein belongs to the phenylalanyl-tRNA synthetase beta subunit family. Type 2 subfamily. Tetramer of two alpha and two beta subunits. Requires Mg(2+) as cofactor.

Its subcellular location is the cytoplasm. The enzyme catalyses tRNA(Phe) + L-phenylalanine + ATP = L-phenylalanyl-tRNA(Phe) + AMP + diphosphate + H(+). The protein is Phenylalanine--tRNA ligase beta subunit of Borreliella burgdorferi (strain ZS7) (Borrelia burgdorferi).